Consider the following 216-residue polypeptide: Uracil phosphoribosyltransferase (216 aa).

Residues R85, R110, and 135-143 (DPMVATGYS) contribute to the 5-phospho-alpha-D-ribose 1-diphosphate site. Residues I200 and 205–207 (GDA) contribute to the uracil site. D206 lines the 5-phospho-alpha-D-ribose 1-diphosphate pocket.

Belongs to the UPRTase family. Mg(2+) is required as a cofactor.

The catalysed reaction is UMP + diphosphate = 5-phospho-alpha-D-ribose 1-diphosphate + uracil. It functions in the pathway pyrimidine metabolism; UMP biosynthesis via salvage pathway; UMP from uracil: step 1/1. Allosterically activated by GTP. Catalyzes the conversion of uracil and 5-phospho-alpha-D-ribose 1-diphosphate (PRPP) to UMP and diphosphate. The polypeptide is Uracil phosphoribosyltransferase (Burkholderia vietnamiensis (strain G4 / LMG 22486) (Burkholderia cepacia (strain R1808))).